Consider the following 88-residue polypeptide: Large ribosomal subunit protein bL27 (88 aa).

Positions 1–21 are disordered; it reads MAHKKGASSSRNGRDSAAHRL.

The protein belongs to the bacterial ribosomal protein bL27 family.

The sequence is that of Large ribosomal subunit protein bL27 from Mycobacterium ulcerans (strain Agy99).